Consider the following 735-residue polypeptide: Protein argonaute (735 aa).

Residues 1–94 (MDLLSNLRRS…LVQMGTKQLD (94 aa)) form an N-terminal domain region. The tract at residues 95-180 (CRNDAHRCAL…IDIHHRFYTP (86 aa)) is linker L1. The PAZ domain stretch occupies residues 181-284 (WTVHQWLEQY…SPSLTMEMLA (104 aa)). The interval 285 to 369 (KVAEDSTVCD…SKTADIRNKG (85 aa)) is linker L2. The tract at residues 370–498 (CAKIGETSFG…LLCKAGWQPI (129 aa)) is mid domain. Residues 499-735 (QLESVDHPEV…NISRDKLIAV (237 aa)) are PIWI domain. Active-site residues include Asp516, Glu550, Asp584, and Asp709. Residue Asp516 coordinates Mn(2+). Mn(2+) contacts are provided by Asp584, Asp709, and Val735.

Belongs to the argonaute family. Long pAgo subfamily. In terms of assembly, copurifies with SSB proteins Synpcc7942_0079 and Synpcc7942_0301 as well as other proteins. It depends on Mn(2+) as a cofactor.

In terms of biological role, a DNA-guided ssDNA endonuclease that might play a role in defense against invading mobile genetic elements. Uses short ssDNA sequences as guides (gDNA) to bind complementary target strands, resulting in cleavage of the target DNA (tDNA). The cleavage site is 10 nucleotides (nt) downstream of the target residue base-paired with the 5'-end of the gDNA. Both 5'-P and 5'-OH gDNAs confer activity; a 5'-OH guide cleaves between nt 10-11 and nt 11-12. Guide DNA mismatches in the seed (nt 2-9) can enhance activity, mismatches 1-5 nt after the cleavage site block activity. Has no appreciable activity with guide RNA or on target RNA. In situ binds to 5'-phosphorylated DNA 14-20 nt in length; small DNA maps over the chromosome and plasmid with some preference for the replication origin and the probable termination site. Also has weak guide-independent nuclease activity on DNA called 'chopping'. Overexpression of wild-type or catalytically inactive mutant has no visible effect during growth under continuous high light for up to a month. This chain is Protein argonaute, found in Synechococcus elongatus (strain ATCC 33912 / PCC 7942 / FACHB-805) (Anacystis nidulans R2).